Here is a 396-residue protein sequence, read N- to C-terminus: Pectinesterase (396 aa).

The signal sequence occupies residues 1–26 (MQSTTLYLKTAAFLGGCSLFAATALA). Threonine 174 contributes to the substrate binding site. The Proton donor role is filled by aspartate 232. Aspartate 259 serves as the catalytic Nucleophile. The substrate site is built by arginine 324 and tryptophan 326.

It belongs to the pectinesterase family.

The protein resides in the secreted. It carries out the reaction [(1-&gt;4)-alpha-D-galacturonosyl methyl ester](n) + n H2O = [(1-&gt;4)-alpha-D-galacturonosyl](n) + n methanol + n H(+). The protein operates within glycan metabolism; pectin degradation; 2-dehydro-3-deoxy-D-gluconate from pectin: step 1/5. Its function is as follows. Involved in maceration and soft-rotting of plant tissue. The polypeptide is Pectinesterase (pme) (Ralstonia solanacearum (Pseudomonas solanacearum)).